Consider the following 913-residue polypeptide: MSRFFANGSDSESESSEEEVQASNFNKANNFQFSDDEEEVKRVVRSTKEKRYENLTGIIKTIRNHKKIKDIPNTLSSFEDLTRAYTKALPVISKEENGITPRFYIRCLAELEDFINEVWEDREGRKNLSKNNSKSLGTLRQKVRKYIKDFEEDLARFREAPDQESDVDEGEGEAHDSDAERAGADSDGGIGAGTGKLAELPKAAKLVPTKVAADEDDSDDSIDWDSDTESETESSEDENLYQNMRERFLKRTTEKEDKDDDKRKDKRKEQKHKVRKRADDDEDGEWETVVKGNVVEKPKMFEKDAEIDIPLVLAKLVEIMSARGKKRTDRRLQIDLLFELRDISEQHELGTPISVKIHFNIISAIFDYNQKISEPMKLEHWALLLEVMQSMLKLLLANPEINMNESVAEEHEEYGAAPYFIRGCPLAAVERLDDEFTKLLKECDPHSNDYVSRLKDEINVVKTIELVVQYFERCGSNNERCRIYLRKIEHLYYKFDPEVLKRKRGELPAAGTAPSSVEVMDKLCKFIYAKDDTDRIRTRAILAHIYHHAMHDNWFQARDLVLMSHLQDNIDAADPSTRILYNRMMANLGLCAFRQENIKDAHHCLVDLMVTGKPKELLAQGLLPQRQHERSAEQEKIEKQRQMPFHMHINLELLECVYLVSAMLLEIPYIAAHEFDARRRMISKTFYQQLRSSERQSLVGPPESMREHVVAAAKAMRCGNWQACANFIVNKKMNTKVWDLFYESERVREMLVKFIKEESLRTYLFTYSNVYTSISIPSLAQMYELPLPKVHSIISKMIINEELMASLDDPSETVVMHRSEPSRLQALAMQFVDKVTNLVDVNEKVFDMKQGNFFQRGNMGNRDRGYNRNQNNQGGNWGGQRRDNRNQRNRNQRGHHKQQQQQQQQQVQTIEEE.

Residues 1 to 31 (MSRFFANGSDSESESSEEEVQASNFNKANNF) are disordered. The segment covering 11-20 (SESESSEEEV) has biased composition (acidic residues). The span at 21-31 (QASNFNKANNF) shows a compositional bias: polar residues. Phosphoserine is present on residues Ser-34, Ser-165, Ser-177, and Ser-186. Disordered stretches follow at residues 157–195 (FREA…AGTG) and 208–285 (PTKV…EDGE). The span at 162–171 (DQESDVDEGE) shows a compositional bias: acidic residues. Over residues 172 to 184 (GEAHDSDAERAGA) the composition is skewed to basic and acidic residues. Residues 214 to 239 (DEDDSDDSIDWDSDTESETESSEDEN) show a composition bias toward acidic residues. Residues 244-263 (MRERFLKRTTEKEDKDDDKR) are compositionally biased toward basic and acidic residues. The span at 264-276 (KDKRKEQKHKVRK) shows a compositional bias: basic residues. The 177-residue stretch at 645-821 (FHMHINLELL…ETVVMHRSEP (177 aa)) folds into the PCI domain. The tract at residues 856 to 913 (RGNMGNRDRGYNRNQNNQGGNWGGQRRDNRNQRNRNQRGHHKQQQQQQQQQVQTIEEE) is disordered. Residues 887 to 898 (QRNRNQRGHHKQ) are compositionally biased toward basic residues.

The protein belongs to the eIF-3 subunit C family. In terms of assembly, component of the eukaryotic translation initiation factor 3 (eIF-3) complex. The eIF-3 complex interacts with pix.

It is found in the cytoplasm. In terms of biological role, component of the eukaryotic translation initiation factor 3 (eIF-3) complex, which is involved in protein synthesis of a specialized repertoire of mRNAs and, together with other initiation factors, stimulates binding of mRNA and methionyl-tRNAi to the 40S ribosome. The eIF-3 complex specifically targets and initiates translation of a subset of mRNAs involved in cell proliferation. In Drosophila virilis (Fruit fly), this protein is Eukaryotic translation initiation factor 3 subunit C.